Here is a 314-residue protein sequence, read N- to C-terminus: Homoserine kinase (314 aa).

An ATP-binding site is contributed by 95–105 (PHSRGLGSSAA).

This sequence belongs to the GHMP kinase family. Homoserine kinase subfamily.

Its subcellular location is the cytoplasm. It carries out the reaction L-homoserine + ATP = O-phospho-L-homoserine + ADP + H(+). Its pathway is amino-acid biosynthesis; L-threonine biosynthesis; L-threonine from L-aspartate: step 4/5. Its function is as follows. Catalyzes the ATP-dependent phosphorylation of L-homoserine to L-homoserine phosphate. The sequence is that of Homoserine kinase from Mycobacterium sp. (strain KMS).